The sequence spans 296 residues: Porphobilinogen deaminase (296 aa).

Cysteine 235 bears the S-(dipyrrolylmethanemethyl)cysteine mark.

This sequence belongs to the HMBS family. Monomer. Requires dipyrromethane as cofactor.

It catalyses the reaction 4 porphobilinogen + H2O = hydroxymethylbilane + 4 NH4(+). Its pathway is porphyrin-containing compound metabolism; protoporphyrin-IX biosynthesis; coproporphyrinogen-III from 5-aminolevulinate: step 2/4. In terms of biological role, tetrapolymerization of the monopyrrole PBG into the hydroxymethylbilane pre-uroporphyrinogen in several discrete steps. The protein is Porphobilinogen deaminase of Alkaliphilus oremlandii (strain OhILAs) (Clostridium oremlandii (strain OhILAs)).